The following is a 388-amino-acid chain: Queuine tRNA-ribosyltransferase (388 aa).

Catalysis depends on D90, which acts as the Proton acceptor. Substrate contacts are provided by residues 90–94, D144, Q205, and G232; that span reads DSGGF. An RNA binding region spans residues 263 to 269; the sequence is GVGTPED. D282 (nucleophile) is an active-site residue. The segment at 287–291 is RNA binding; important for wobble base 34 recognition; that stretch reads TRNAR. The Zn(2+) site is built by C320, C322, C325, and H351.

This sequence belongs to the queuine tRNA-ribosyltransferase family. Homodimer. Within each dimer, one monomer is responsible for RNA recognition and catalysis, while the other monomer binds to the replacement base PreQ1. Zn(2+) serves as cofactor.

It catalyses the reaction 7-aminomethyl-7-carbaguanine + guanosine(34) in tRNA = 7-aminomethyl-7-carbaguanosine(34) in tRNA + guanine. It functions in the pathway tRNA modification; tRNA-queuosine biosynthesis. In terms of biological role, catalyzes the base-exchange of a guanine (G) residue with the queuine precursor 7-aminomethyl-7-deazaguanine (PreQ1) at position 34 (anticodon wobble position) in tRNAs with GU(N) anticodons (tRNA-Asp, -Asn, -His and -Tyr). Catalysis occurs through a double-displacement mechanism. The nucleophile active site attacks the C1' of nucleotide 34 to detach the guanine base from the RNA, forming a covalent enzyme-RNA intermediate. The proton acceptor active site deprotonates the incoming PreQ1, allowing a nucleophilic attack on the C1' of the ribose to form the product. After dissociation, two additional enzymatic reactions on the tRNA convert PreQ1 to queuine (Q), resulting in the hypermodified nucleoside queuosine (7-(((4,5-cis-dihydroxy-2-cyclopenten-1-yl)amino)methyl)-7-deazaguanosine). In Campylobacter curvus (strain 525.92), this protein is Queuine tRNA-ribosyltransferase.